The following is a 348-amino-acid chain: Dihydroorotase (348 aa).

The Zn(2+) site is built by H17 and H19. Substrate-binding positions include 19 to 21 and N45; that span reads HLR. Residues K103, H140, and H178 each contribute to the Zn(2+) site. At K103 the chain carries N6-carboxylysine. H140 is a substrate binding site. Residue L223 coordinates substrate. D251 provides a ligand contact to Zn(2+). D251 is an active-site residue. Substrate contacts are provided by H255 and A267.

This sequence belongs to the metallo-dependent hydrolases superfamily. DHOase family. Class II DHOase subfamily. In terms of assembly, homodimer. The cofactor is Zn(2+).

It carries out the reaction (S)-dihydroorotate + H2O = N-carbamoyl-L-aspartate + H(+). The protein operates within pyrimidine metabolism; UMP biosynthesis via de novo pathway; (S)-dihydroorotate from bicarbonate: step 3/3. Its function is as follows. Catalyzes the reversible cyclization of carbamoyl aspartate to dihydroorotate. In Salmonella paratyphi A (strain ATCC 9150 / SARB42), this protein is Dihydroorotase.